The chain runs to 600 residues: ATP-dependent lipid A-core flippase (600 aa).

A run of 4 helical transmembrane segments spans residues 26–46, 82–102, 167–187, and 266–286; these read VGIF…QPML, LLIV…NYFL, VFLF…MLAI, and PMLQ…VLFL. The region spanning 30 to 321 is the ABC transmembrane type-1 domain; it reads LLSIIGFVIF…LSEVSSTIQK (292 aa). The ABC transporter domain occupies 353–589; sequence LEVKNLSFFY…NGYYARLHAM (237 aa). 387 to 394 serves as a coordination point for ATP; that stretch reads GRSGSGKS.

It belongs to the ABC transporter superfamily. Lipid exporter (TC 3.A.1.106) family. In terms of assembly, homodimer.

It is found in the cell inner membrane. It carries out the reaction ATP + H2O + lipid A-core oligosaccharideSide 1 = ADP + phosphate + lipid A-core oligosaccharideSide 2.. Involved in lipopolysaccharide (LPS) biosynthesis. Translocates lipid A-core from the inner to the outer leaflet of the inner membrane. Transmembrane domains (TMD) form a pore in the inner membrane and the ATP-binding domain (NBD) is responsible for energy generation. The protein is ATP-dependent lipid A-core flippase of Pseudomonas savastanoi pv. phaseolicola (strain 1448A / Race 6) (Pseudomonas syringae pv. phaseolicola (strain 1448A / Race 6)).